A 588-amino-acid chain; its full sequence is Proteasome-associated ATPase (588 aa).

Residues 1–10 (MAAHDDDMNR) are compositionally biased toward basic and acidic residues. The tract at residues 1-23 (MAAHDDDMNRGIRPGRGSDDPSG) is disordered. Positions 47 to 94 (RILEERIVELQTNLAGVSAQNERLANTLREARDQIVALKEEVDRLAQP) form a coiled coil. 276–281 (GCGKTL) contributes to the ATP binding site. Residues 587–588 (YL) are docks into pockets in the proteasome alpha-ring.

Belongs to the AAA ATPase family. In terms of assembly, homohexamer. Assembles into a hexameric ring structure that caps the 20S proteasome core. Strongly interacts with the prokaryotic ubiquitin-like protein Pup through a hydrophobic interface; the interacting region of ARC lies in its N-terminal coiled-coil domain. There is one Pup binding site per ARC hexamer ring. Upon ATP-binding, the C-terminus of ARC interacts with the alpha-rings of the proteasome core, possibly by binding to the intersubunit pockets.

The protein operates within protein degradation; proteasomal Pup-dependent pathway. ATPase which is responsible for recognizing, binding, unfolding and translocation of pupylated proteins into the bacterial 20S proteasome core particle. May be essential for opening the gate of the 20S proteasome via an interaction with its C-terminus, thereby allowing substrate entry and access to the site of proteolysis. Thus, the C-termini of the proteasomal ATPase may function like a 'key in a lock' to induce gate opening and therefore regulate proteolysis. In Streptomyces scabiei (strain 87.22), this protein is Proteasome-associated ATPase.